The following is a 133-amino-acid chain: MKNMAKKTNTRPKRRQRKNIDSGVAHIRSTFNNTIVTITDPHGNAISWASAGALGFKGSRKSTPFAAQMAAESAAKTAMEHGMKTIEVSVKGPGAGREAAIRSLQAVGLEVNMIKDVTPVPHNGCRPPKRRRV.

Belongs to the universal ribosomal protein uS11 family. In terms of assembly, part of the 30S ribosomal subunit. Interacts with proteins S7 and S18. Binds to IF-3.

Its function is as follows. Located on the platform of the 30S subunit, it bridges several disparate RNA helices of the 16S rRNA. Forms part of the Shine-Dalgarno cleft in the 70S ribosome. This chain is Small ribosomal subunit protein uS11, found in Shouchella clausii (strain KSM-K16) (Alkalihalobacillus clausii).